The following is a 155-amino-acid chain: Small ribosomal subunit protein uS7 (155 aa).

The protein belongs to the universal ribosomal protein uS7 family. As to quaternary structure, part of the 30S ribosomal subunit. Contacts proteins S9 and S11.

In terms of biological role, one of the primary rRNA binding proteins, it binds directly to 16S rRNA where it nucleates assembly of the head domain of the 30S subunit. Is located at the subunit interface close to the decoding center, probably blocks exit of the E-site tRNA. This is Small ribosomal subunit protein uS7 from Xanthomonas axonopodis pv. citri (strain 306).